The sequence spans 299 residues: Transcription elongation factor A protein 2 (299 aa).

The TFIIS N-terminal domain maps to 5-82; that stretch reads EEIARIARRL…KSWKKLLDVS (78 aa). A Glycyl lysine isopeptide (Lys-Gly) (interchain with G-Cter in ubiquitin) cross-link involves residue lysine 57. Phosphoserine occurs at positions 59 and 100. Positions 83–126 are disordered; the sequence is DGKSRDQGRGTPLPTSSSKDASGTTDLSCKKPDPPRTSSTPRIT. The segment covering 95-109 has biased composition (polar residues); that stretch reads LPTSSSKDASGTTDL. Residues 138–254 enclose the TFIIS central domain; that stretch reads VRNKCREMLT…EHQMARTGGT (117 aa). The TFIIS-type zinc finger occupies 257–297; it reads DLFTCNKCRKKNCTYTQVQTRSSDEPMTTYVVCNECGNRWK. Residues cysteine 261, cysteine 264, cysteine 289, and cysteine 292 each coordinate Zn(2+).

This sequence belongs to the TFS-II family. Interacts with the basal transcription factor GTF2B. Interacts with REXO1. In terms of tissue distribution, testis specific.

The protein resides in the nucleus. In terms of biological role, necessary for efficient RNA polymerase II transcription elongation past template-encoded arresting sites. The arresting sites in DNA have the property of trapping a certain fraction of elongating RNA polymerases that pass through, resulting in locked ternary complexes. Cleavage of the nascent transcript by S-II allows the resumption of elongation from the new 3'-terminus. This Rattus norvegicus (Rat) protein is Transcription elongation factor A protein 2 (Tcea2).